A 360-amino-acid polypeptide reads, in one-letter code: Alpha-methylacyl-CoA racemase (360 aa).

Residues Arg38, 59–62, 83–85, Arg91, and 125–130 each bind substrate; these read ADLK, GYR, and GHDINY. Residue His126 is the Proton acceptor of the active site. Catalysis depends on Asp156, which acts as the Proton donor.

This sequence belongs to the CoA-transferase III family. Homodimer.

The catalysed reaction is a (2S)-2-methylacyl-CoA = a (2R)-2-methylacyl-CoA. The enzyme catalyses (2S)-2-methyltetradecanoyl-CoA = (2R)-2-methyltetradecanoyl-CoA. It carries out the reaction (2R)-pristanoyl-CoA = (2S)-pristanoyl-CoA. It catalyses the reaction (25S)-3-oxocholest-4-en-26-oyl-CoA = (25R)-3-oxocholest-4-en-26-oyl-CoA. The catalysed reaction is (2S)-ibuprofenoyl-CoA = (2R)-ibuprofenoyl-CoA. With respect to regulation, inactivated by N,N-dialkylcarbamoyl-CoA substrate-product analogs. Catalyzes the epimerization of (2R)- and (2S)-methylacyl-coenzyme A (CoA) thioesters. Accepts as substrates a wide range of alpha-methylacyl-CoAs, including (2R)-2-methylmyristoyl-CoA and (2S)-2-methylmyristoyl-CoA, (2R)-pristanoyl-CoA and (2S)-pristanoyl-CoA, and the cholesterol esters (25R)-3-oxo-cholest-4-en-26-oyl-CoA and (25S)-3-oxo-cholest-4-en-26-oyl-CoA. Can also catalyze the interconversion of the non-physiologic substrates (2R)-ibuprofenoyl-CoA and (2S)-ibuprofenoyl-CoA, which are potential competitive inhibitors of the enzyme. The protein is Alpha-methylacyl-CoA racemase of Mycobacterium tuberculosis (strain ATCC 25618 / H37Rv).